An 831-amino-acid chain; its full sequence is MADDGMLLNFSIPETGILSRPSLKGGNWRDRAAAKKAAQNWHTKASARLTGEKVDKVAKKTVENATDVNRTQLGQRTRRASKSPEVHEDIDRPAKRARVSGDFRPKSNEKSAAEAGDYRPQINPGATQKPSERQSAPKGAKGGKQVISSLFTYNPTSTTKTQAPEKRHDEEPIEPSNAPLSSELDTFTSLGISTTLAAHLLKKMDLKAPTAIQKAAITQLVKDDSDAFIQAETGSGKTLAYLLPIVQRLMELSANMKKHKDDDAVQRNSGLFAIIMAPTRELSKQIALVLEKLLGCAHWLVATTVIGGEKKKSEKARLRKGINILVATPGRLADHLEHTEALDVSNVRWLVLDEGDRLMELGFEQEIQKIVGALNLRMRGNKTRIPGLPDKRTTVLCSATMKMDVERLGQISLKDAVHLRADPTEREQEGDEPQDERSYAPAQLKQSYAVVAPKLRLVSLIAYLKRAFTRKGSVMKAIVFVSCADSVDFHFDILTSNLEEKNEKAEGTKDDTEEKADDDEPKKSTKKPKAIPQADPTKLSVTHAESPVLSPKSHAVTAYRLHGSLQQSLRTSTLAHFTKNNDAAVLIATDVASRGLDLPNVDLVVEFDPAFAREDHLHRIGRTARAGRDGRACIFLMPGPEEGYVDILKTDRKDNEAGITITRQDADDILTRGLVTSGIATKNAYMDIAQDLQLNVERWALASPARLESARRAFQSHIRAYATHVADERKYFDIKSLHLGHLAKAFALRERPSGMKAPGLRTGAGRNDRTPAKIRGANAAKIGSAPAAKKAVDLDIPDAKDTEEAAKMRKAVRAREKFMRHAGMADEFNLG.

A compositionally biased stretch (polar residues) spans 65–75 (ATDVNRTQLGQ). The tract at residues 65–180 (ATDVNRTQLG…EPIEPSNAPL (116 aa)) is disordered. A compositionally biased stretch (basic and acidic residues) spans 82–112 (KSPEVHEDIDRPAKRARVSGDFRPKSNEKSA). The span at 146-162 (VISSLFTYNPTSTTKTQ) shows a compositional bias: polar residues. Positions 185–214 (DTFTSLGISTTLAAHLLKKMDLKAPTAIQK) match the Q motif motif. Positions 218 to 419 (TQLVKDDSDA…QISLKDAVHL (202 aa)) constitute a Helicase ATP-binding domain. 231–238 (AETGSGKT) lines the ATP pocket. Residues 353 to 356 (DEGD) carry the DEAD box motif. Disordered regions lie at residues 419-441 (LRAD…SYAP) and 501-543 (KNEK…SVTH). Positions 456 to 670 (RLVSLIAYLK…ITRQDADDIL (215 aa)) constitute a Helicase C-terminal domain. The span at 501-512 (KNEKAEGTKDDT) shows a compositional bias: basic and acidic residues.

It belongs to the DEAD box helicase family. DDX31/DBP7 subfamily.

It is found in the nucleus. Its subcellular location is the nucleolus. It carries out the reaction ATP + H2O = ADP + phosphate + H(+). In terms of biological role, ATP-binding RNA helicase involved in the biogenesis of 60S ribosomal subunits and is required for the normal formation of 25S and 5.8S rRNAs. The polypeptide is ATP-dependent RNA helicase DBP7 (DBP7) (Phaeosphaeria nodorum (strain SN15 / ATCC MYA-4574 / FGSC 10173) (Glume blotch fungus)).